The primary structure comprises 376 residues: Erythronate-4-phosphate dehydrogenase (376 aa).

2 residues coordinate substrate: S45 and T67. An NAD(+)-binding site is contributed by D147. The active site involves R209. Residue D233 participates in NAD(+) binding. E238 is an active-site residue. Residue H255 is the Proton donor of the active site. G258 serves as a coordination point for NAD(+). Y259 contributes to the substrate binding site.

This sequence belongs to the D-isomer specific 2-hydroxyacid dehydrogenase family. PdxB subfamily. Homodimer.

It localises to the cytoplasm. The enzyme catalyses 4-phospho-D-erythronate + NAD(+) = (R)-3-hydroxy-2-oxo-4-phosphooxybutanoate + NADH + H(+). It participates in cofactor biosynthesis; pyridoxine 5'-phosphate biosynthesis; pyridoxine 5'-phosphate from D-erythrose 4-phosphate: step 2/5. Its function is as follows. Catalyzes the oxidation of erythronate-4-phosphate to 3-hydroxy-2-oxo-4-phosphonooxybutanoate. The sequence is that of Erythronate-4-phosphate dehydrogenase from Shewanella sp. (strain W3-18-1).